The following is a 337-amino-acid chain: uncharacterized protein (337 aa).

2 helical membrane passes run 4-24 (FIFF…FSLI) and 26-46 (LLLW…LFAL).

It belongs to the plectrovirus ORF2 family.

The protein localises to the host membrane. This is an uncharacterized protein from Spiroplasma melliferum (SpV1).